A 110-amino-acid chain; its full sequence is Putative membrane protein insertion efficiency factor (110 aa).

This sequence belongs to the UPF0161 family.

The protein resides in the cell inner membrane. In terms of biological role, could be involved in insertion of integral membrane proteins into the membrane. This is Putative membrane protein insertion efficiency factor from Aliarcobacter butzleri (strain RM4018) (Arcobacter butzleri).